The following is a 207-amino-acid chain: LexA repressor (207 aa).

Residues 28-48 (RAEISRELGFKSANAAEEHLK) constitute a DNA-binding region (H-T-H motif). Catalysis depends on for autocatalytic cleavage activity residues S123 and K160.

This sequence belongs to the peptidase S24 family. As to quaternary structure, homodimer.

The enzyme catalyses Hydrolysis of Ala-|-Gly bond in repressor LexA.. Its function is as follows. Represses a number of genes involved in the response to DNA damage (SOS response), including recA and lexA. In the presence of single-stranded DNA, RecA interacts with LexA causing an autocatalytic cleavage which disrupts the DNA-binding part of LexA, leading to derepression of the SOS regulon and eventually DNA repair. The protein is LexA repressor of Haemophilus influenzae (strain ATCC 51907 / DSM 11121 / KW20 / Rd).